The primary structure comprises 278 residues: Shikimate dehydrogenase (NADP(+)) (278 aa).

Residues Ser14–Ser16 and Thr61 contribute to the shikimate site. Lys65 functions as the Proton acceptor in the catalytic mechanism. Asn86 and Asp102 together coordinate shikimate. Residues Gly127–Ala131, Asn151–Lys156, and Met221 each bind NADP(+). Position 223 (Tyr223) interacts with shikimate. Residue Gly245 coordinates NADP(+).

Belongs to the shikimate dehydrogenase family. Homodimer.

It catalyses the reaction shikimate + NADP(+) = 3-dehydroshikimate + NADPH + H(+). It participates in metabolic intermediate biosynthesis; chorismate biosynthesis; chorismate from D-erythrose 4-phosphate and phosphoenolpyruvate: step 4/7. Functionally, involved in the biosynthesis of the chorismate, which leads to the biosynthesis of aromatic amino acids. Catalyzes the reversible NADPH linked reduction of 3-dehydroshikimate (DHSA) to yield shikimate (SA). This is Shikimate dehydrogenase (NADP(+)) from Saccharophagus degradans (strain 2-40 / ATCC 43961 / DSM 17024).